The primary structure comprises 217 residues: Nitrile hydratase subunit beta (217 aa).

It belongs to the nitrile hydratase subunit beta family. As to quaternary structure, heterodimer of an alpha and a beta chain.

It carries out the reaction an aliphatic primary amide = an aliphatic nitrile + H2O. Functionally, NHase catalyzes the hydration of various nitrile compounds to the corresponding amides. This is Nitrile hydratase subunit beta (nthB) from Pseudomonas putida (Arthrobacter siderocapsulatus).